A 73-amino-acid chain; its full sequence is V-type proton ATPase subunit e (73 aa).

Topologically, residues 1–3 (MSS) are lumenal. A helical transmembrane segment spans residues 4–24 (FYTVVGVFIVVSAMSVLFWIM). Residues 25–35 (APKNNQAVWRS) are Cytoplasmic-facing. A helical transmembrane segment spans residues 36 to 56 (TVILTLAMMFLMWAITFLCQL). Residues 57-73 (HPLVAPRRSDLRPEFAE) lie on the Lumenal side of the membrane.

The protein belongs to the V-ATPase e1/e2 subunit family. In terms of assembly, V-ATPase is a heteromultimeric enzyme composed of a peripheral catalytic V1 complex (components A to H) attached to an integral membrane V0 proton pore complex (components: a, c, c', c'', d, e, f and VOA1).

The protein localises to the vacuole membrane. In terms of biological role, subunit of the V0 complex of vacuolar(H+)-ATPase (V-ATPase), a multisubunit enzyme composed of a peripheral complex (V1) that hydrolyzes ATP and a membrane integral complex (V0) that translocates protons. V-ATPase is responsible for acidifying and maintaining the pH of intracellular compartments. The chain is V-type proton ATPase subunit e (VMA9) from Saccharomyces cerevisiae (strain ATCC 204508 / S288c) (Baker's yeast).